The sequence spans 121 residues: Large ribosomal subunit protein uL14c (121 aa).

The protein belongs to the universal ribosomal protein uL14 family. Part of the 50S ribosomal subunit.

It is found in the plastid. The protein resides in the chloroplast. Binds to 23S rRNA. This Pelargonium hortorum (Common geranium) protein is Large ribosomal subunit protein uL14c.